A 116-amino-acid chain; its full sequence is UPF0342 protein BH1149 (116 aa).

Belongs to the UPF0342 family.

The chain is UPF0342 protein BH1149 from Halalkalibacterium halodurans (strain ATCC BAA-125 / DSM 18197 / FERM 7344 / JCM 9153 / C-125) (Bacillus halodurans).